The following is a 301-amino-acid chain: Small ribosomal subunit protein uS3 (301 aa).

The KH type-2 domain occupies 39 to 107 (VREYLKAKLK…PVAVNIEEVR (69 aa)). A disordered region spans residues 211-301 (GESPGAKLDA…AAAADGTKTE (91 aa)). A compositionally biased stretch (basic and acidic residues) spans 224–244 (DEERKPRGPRRDARPGSDRPA). Residues 245-257 (PRGARAPRAPAGG) are compositionally biased toward low complexity.

Belongs to the universal ribosomal protein uS3 family. As to quaternary structure, part of the 30S ribosomal subunit. Forms a tight complex with proteins S10 and S14.

Functionally, binds the lower part of the 30S subunit head. Binds mRNA in the 70S ribosome, positioning it for translation. The sequence is that of Small ribosomal subunit protein uS3 from Polaromonas sp. (strain JS666 / ATCC BAA-500).